The primary structure comprises 158 residues: S-ribosylhomocysteine lyase (158 aa).

Positions 54, 58, and 124 each coordinate Fe cation.

It belongs to the LuxS family. As to quaternary structure, homodimer. Requires Fe cation as cofactor.

It carries out the reaction S-(5-deoxy-D-ribos-5-yl)-L-homocysteine = (S)-4,5-dihydroxypentane-2,3-dione + L-homocysteine. Its function is as follows. Involved in the synthesis of autoinducer 2 (AI-2) which is secreted by bacteria and is used to communicate both the cell density and the metabolic potential of the environment. The regulation of gene expression in response to changes in cell density is called quorum sensing. Catalyzes the transformation of S-ribosylhomocysteine (RHC) to homocysteine (HC) and 4,5-dihydroxy-2,3-pentadione (DPD). This is S-ribosylhomocysteine lyase from Limosilactobacillus reuteri (strain DSM 20016) (Lactobacillus reuteri).